Consider the following 132-residue polypeptide: Small ribosomal subunit protein uS8 (132 aa).

The protein belongs to the universal ribosomal protein uS8 family. As to quaternary structure, part of the 30S ribosomal subunit. Contacts proteins S5 and S12.

In terms of biological role, one of the primary rRNA binding proteins, it binds directly to 16S rRNA central domain where it helps coordinate assembly of the platform of the 30S subunit. In Geobacter metallireducens (strain ATCC 53774 / DSM 7210 / GS-15), this protein is Small ribosomal subunit protein uS8.